Here is a 380-residue protein sequence, read N- to C-terminus: Cystathionine beta-lyase (380 aa).

Residue Lys-196 is modified to N6-(pyridoxal phosphate)lysine.

The protein belongs to the trans-sulfuration enzymes family. The cofactor is pyridoxal 5'-phosphate.

It localises to the cytoplasm. The enzyme catalyses L,L-cystathionine + H2O = L-homocysteine + pyruvate + NH4(+). It carries out the reaction an S-substituted L-cysteine + H2O = a thiol + pyruvate + NH4(+). It participates in amino-acid biosynthesis; L-methionine biosynthesis via de novo pathway; L-homocysteine from L-cystathionine: step 1/1. The enzymatic degradation of amino acids in cheese is believed to generate aroma compounds and therefore to be essential for flavor development. Cystathionine beta-lyase (CBL) can convert cystathionine to homocysteine but is also able to catalyze an alpha, gamma elimination. With methionine as a substrate, it produces volatile sulfur compounds which are important for flavor formation in Gouda cheese. This is Cystathionine beta-lyase (metC) from Lactococcus lactis subsp. cremoris (Streptococcus cremoris).